The primary structure comprises 40 residues: U1-ectatotoxin-Eb1a subunit A (40 aa).

The protein belongs to the ectatomin family. Ectatomin-Eq subfamily. In terms of assembly, heterodimer of subunits A and B; disulfide-linked. In terms of tissue distribution, expressed by the venom gland.

The protein resides in the secreted. It localises to the target cell membrane. The chain is U1-ectatotoxin-Eb1a subunit A from Ectatomma brunneum (Ant).